The sequence spans 354 residues: Type II secretion system protein K (354 aa).

Residues 1–7 constitute a propeptide, leader sequence; sequence MSRRQRG. The helical transmembrane segment at 8–28 threads the bilayer; the sequence is VALLIVMLMLSLMVTIAASIT. The Periplasmic segment spans residues 29-354; the sequence is ERSGKAWQRT…QYGGYRTVNP (326 aa). The interval 114 to 151 is disordered; sequence NVTPNNASGNNTSGNNNAANGSSGNGNSPQPPKVGTSE. A compositionally biased stretch (low complexity) spans 118–141; the sequence is NNASGNNTSGNNNAANGSSGNGNS.

The protein belongs to the GSP K family. In terms of assembly, type II secretion is composed of four main components: the outer membrane complex, the inner membrane complex, the cytoplasmic secretion ATPase and the periplasm-spanning pseudopilus. Interacts with core component OutG. In terms of processing, cleaved by prepilin peptidase.

It localises to the cell inner membrane. Its function is as follows. Component of the type II secretion system required for the energy-dependent secretion of extracellular factors such as proteases and toxins from the periplasm. Plays a role in pseudopilus assembly and seems to control its length. Interacts with the pseudopilus tip complex that is critical for the recognition and binding of secretion substrates. The protein is Type II secretion system protein K (outK) of Dickeya chrysanthemi (Pectobacterium chrysanthemi).